A 528-amino-acid polypeptide reads, in one-letter code: Dihydromonacolin L monooxygenase LovA (528 aa).

Over 1-23 (MTVDALTQPHHLLSLAWNDTQQH) the chain is Cytoplasmic. The chain crosses the membrane as a helical; Signal-anchor for type II membrane protein span at residues 24–44 (GSWFAPLVTTSAGLLCLLLYL). The Lumenal segment spans residues 45–528 (CSSGRRSDLP…DEDIRLPGSL (484 aa)). Cys465 contributes to the heme binding site.

It belongs to the cytochrome P450 family. Heme serves as cofactor.

It localises to the membrane. The protein resides in the endoplasmic reticulum membrane. It carries out the reaction dihydromonacolin L carboxylate + reduced [NADPH--hemoprotein reductase] + O2 = monacolin L carboxylate + oxidized [NADPH--hemoprotein reductase] + 2 H2O + H(+). The enzyme catalyses monacolin L carboxylate + reduced [NADPH--hemoprotein reductase] + O2 = monacolin J carboxylate + oxidized [NADPH--hemoprotein reductase] + H2O + H(+). It participates in polyketide biosynthesis; lovastatin biosynthesis. Dihydromonacolin L monooxygenase; part of the gene cluster that mediates the biosynthesis of lovastatin (also known as mevinolin, mevacor or monacolin K), a hypolipidemic inhibitor of (3S)-hydroxymethylglutaryl-coenzyme A (HMG-CoA) reductase (HMGR). The first step in the biosynthesis of lovastatin is the production of dihydromonacolin L acid by the lovastatin nonaketide synthase lovB and the trans-acting enoyl reductase lovC via condensation of one acetyl-CoA unit and 8 malonyl-CoA units. Dihydromonacolin L acid is released from lovB by the thioesterase lovG. Next, dihydromonacolin L acid is oxidized by the dihydromonacolin L monooxygenase lovA twice to form monacolin J acid. The 2-methylbutyrate moiety of lovastatin is synthesized by the lovastatin diketide synthase lovF via condensation of one acetyl-CoA unit and one malonyl-CoA unit. Finally, the covalent attachment of this moiety to monacolin J acid is catalyzed by the transesterase lovD to yield lovastatin. LovD has broad substrate specificity and can also convert monacolin J to simvastatin using alpha-dimethylbutanoyl-S-methyl-3-mercaptopropionate (DMB-S-MMP) as the thioester acyl donor, and can also catalyze the reverse reaction and function as hydrolase in vitro. LovD has much higher activity with LovF-bound 2-methylbutanoate than with free diketide substrates. The sequence is that of Dihydromonacolin L monooxygenase LovA from Aspergillus terreus.